A 109-amino-acid polypeptide reads, in one-letter code: Homeobox protein E30 (109 aa).

Basic residues predominate over residues 1–12 (GPRTRRVKRSHN). The segment at 1–27 (GPRTRRVKRSHNGKNGSPEEKRPRTAF) is disordered. Positions 20–79 (EKRPRTAFSAEQLARLKREFAENRYLTERRRQQLSRDLGLTEAQIKIWFQNKRAKIKKAS) form a DNA-binding region, homeobox.

The protein belongs to the engrailed homeobox family.

It is found in the nucleus. The sequence is that of Homeobox protein E30 from Apis mellifera (Honeybee).